The sequence spans 379 residues: Tetraacyldisaccharide 4'-kinase (379 aa).

63–70 (AVGGAGKT) lines the ATP pocket.

This sequence belongs to the LpxK family.

The catalysed reaction is a lipid A disaccharide + ATP = a lipid IVA + ADP + H(+). It functions in the pathway glycolipid biosynthesis; lipid IV(A) biosynthesis; lipid IV(A) from (3R)-3-hydroxytetradecanoyl-[acyl-carrier-protein] and UDP-N-acetyl-alpha-D-glucosamine: step 6/6. Transfers the gamma-phosphate of ATP to the 4'-position of a tetraacyldisaccharide 1-phosphate intermediate (termed DS-1-P) to form tetraacyldisaccharide 1,4'-bis-phosphate (lipid IVA). The polypeptide is Tetraacyldisaccharide 4'-kinase (Anaeromyxobacter dehalogenans (strain 2CP-1 / ATCC BAA-258)).